We begin with the raw amino-acid sequence, 341 residues long: Ribonucleoside-diphosphate reductase subunit beta (341 aa).

Residues Asp89, Glu120, and His123 each coordinate Fe cation. Residue Tyr127 is part of the active site. Fe cation-binding residues include Glu185, Glu219, and His222.

It belongs to the ribonucleoside diphosphate reductase small chain family. Tetramer of two alpha and two beta subunits. It depends on Fe cation as a cofactor.

It carries out the reaction a 2'-deoxyribonucleoside 5'-diphosphate + [thioredoxin]-disulfide + H2O = a ribonucleoside 5'-diphosphate + [thioredoxin]-dithiol. Its function is as follows. Provides the precursors necessary for DNA synthesis. Catalyzes the biosynthesis of deoxyribonucleotides from the corresponding ribonucleotides. This chain is Ribonucleoside-diphosphate reductase subunit beta (nrdB), found in Helicobacter pylori (strain J99 / ATCC 700824) (Campylobacter pylori J99).